Reading from the N-terminus, the 126-residue chain is Protein VraC (126 aa).

The protein is Protein VraC of Staphylococcus haemolyticus (strain JCSC1435).